The following is a 200-amino-acid chain: dITP/XTP pyrophosphatase (200 aa).

Substrate is bound at residue 7–12 (SNNRGK). Aspartate 68 functions as the Proton acceptor in the catalytic mechanism. Residue aspartate 68 participates in Mg(2+) binding. Residues alanine 69, 154–157 (FGFD), lysine 177, and 182–183 (HR) contribute to the substrate site.

This sequence belongs to the HAM1 NTPase family. Homodimer. The cofactor is Mg(2+).

It catalyses the reaction XTP + H2O = XMP + diphosphate + H(+). The catalysed reaction is dITP + H2O = dIMP + diphosphate + H(+). It carries out the reaction ITP + H2O = IMP + diphosphate + H(+). In terms of biological role, pyrophosphatase that catalyzes the hydrolysis of nucleoside triphosphates to their monophosphate derivatives, with a high preference for the non-canonical purine nucleotides XTP (xanthosine triphosphate), dITP (deoxyinosine triphosphate) and ITP. Seems to function as a house-cleaning enzyme that removes non-canonical purine nucleotides from the nucleotide pool, thus preventing their incorporation into DNA/RNA and avoiding chromosomal lesions. This chain is dITP/XTP pyrophosphatase, found in Delftia acidovorans (strain DSM 14801 / SPH-1).